The following is a 209-amino-acid chain: Geminin (209 aa).

A disordered region spans residues 1–79 (MNPSMKQKQE…PESSENKNLG (79 aa)). Basic and acidic residues predominate over residues 7–16 (QKQEEIKENI). Position 27 is an N6-acetyllysine (Lys-27). A phosphoserine mark is found at Ser-34, Ser-36, Ser-49, Ser-63, and Ser-64. The interval 82 to 161 (TQESFDLMIK…AELIERLNGE (80 aa)) is necessary and sufficient for interaction with IDAS and CDT1. Residues 94–144 (PSSQYWKEVAEKRRKALYEALKENEKLHKEIEQKDNEIARLKKENKELAEV) are a coiled coil. The disordered stretch occupies residues 164–209 (DNFESLDNQEFDSEEETVEDSLVEDSEIGTCAEGTVSSSTDAKPCI). A homeodomain binding region spans residues 170–190 (DNQEFDSEEETVEDSLVEDSE). A compositionally biased stretch (acidic residues) spans 170–190 (DNQEFDSEEETVEDSLVEDSE). A Phosphoserine; by CK2 modification is found at Ser-184. Positions 198-209 (TVSSSTDAKPCI) are enriched in polar residues.

Belongs to the geminin family. As to quaternary structure, homotetramer. Interacts with CDT1; this inhibits binding of the MCM complex to origins of replication. The complex with CDT1 exists in two forms, a 'permissive' heterotrimer and an 'inhibitory' heterohexamer. Interacts (via coiled-coil domain) with IDAS (via coiled-coil domain); this targets GMNN to the nucleus. The heterodimer formed by GMNN and MCIDAS has much lower affinity for CDT1 than the GMNN homodimer. Interacts with a subset of Hox proteins, affinity increasing from anterior to posterior types, the strongest interaction being with HOXB1, HOXC9 and HOXD10. Interacts with LRWD1 from G1/S to mitosis. Post-translationally, phosphorylated during mitosis. Phosphorylation at Ser-184 by CK2 results in enhanced binding to Hox proteins and more potent inhibitory effect on Hox transcriptional activity.

It localises to the cytoplasm. Its subcellular location is the nucleus. Inhibits DNA replication by preventing the incorporation of MCM complex into pre-replication complex (pre-RC). It is degraded during the mitotic phase of the cell cycle. Its destruction at the metaphase-anaphase transition permits replication in the succeeding cell cycle. Inhibits histone acetyltransferase activity of KAT7/HBO1 in a CDT1-dependent manner, inhibiting histone H4 acetylation and DNA replication licensing. Inhibits the transcriptional activity of a subset of Hox proteins, enrolling them in cell proliferative control. The sequence is that of Geminin (GMNN) from Homo sapiens (Human).